The chain runs to 507 residues: ATP synthase subunit alpha, chloroplastic (507 aa).

170 to 177 (GDRQTGKT) lines the ATP pocket.

The protein belongs to the ATPase alpha/beta chains family. As to quaternary structure, F-type ATPases have 2 components, CF(1) - the catalytic core - and CF(0) - the membrane proton channel. CF(1) has five subunits: alpha(3), beta(3), gamma(1), delta(1), epsilon(1). CF(0) has four main subunits: a, b, b' and c.

It localises to the plastid. Its subcellular location is the chloroplast thylakoid membrane. The enzyme catalyses ATP + H2O + 4 H(+)(in) = ADP + phosphate + 5 H(+)(out). Functionally, produces ATP from ADP in the presence of a proton gradient across the membrane. The alpha chain is a regulatory subunit. The protein is ATP synthase subunit alpha, chloroplastic of Chloranthus spicatus (Chulantree).